Here is a 126-residue protein sequence, read N- to C-terminus: Protein ApaG (126 aa).

The 125-residue stretch at 2 to 126 folds into the ApaG domain; sequence SDTQHQVNVR…FRLAVPGALH (125 aa).

In Pseudomonas paraeruginosa (strain DSM 24068 / PA7) (Pseudomonas aeruginosa (strain PA7)), this protein is Protein ApaG.